A 298-amino-acid polypeptide reads, in one-letter code: 4-hydroxy-tetrahydrodipicolinate synthase (298 aa).

Threonine 48 is a binding site for pyruvate. The active-site Proton donor/acceptor is the tyrosine 137. The Schiff-base intermediate with substrate role is filled by lysine 166. Isoleucine 207 is a binding site for pyruvate.

Belongs to the DapA family. As to quaternary structure, homotetramer; dimer of dimers.

The protein resides in the cytoplasm. The catalysed reaction is L-aspartate 4-semialdehyde + pyruvate = (2S,4S)-4-hydroxy-2,3,4,5-tetrahydrodipicolinate + H2O + H(+). It functions in the pathway amino-acid biosynthesis; L-lysine biosynthesis via DAP pathway; (S)-tetrahydrodipicolinate from L-aspartate: step 3/4. Functionally, catalyzes the condensation of (S)-aspartate-beta-semialdehyde [(S)-ASA] and pyruvate to 4-hydroxy-tetrahydrodipicolinate (HTPA). The polypeptide is 4-hydroxy-tetrahydrodipicolinate synthase (Campylobacter hominis (strain ATCC BAA-381 / DSM 21671 / CCUG 45161 / LMG 19568 / NCTC 13146 / CH001A)).